A 441-amino-acid chain; its full sequence is Glutamate-1-semialdehyde 2,1-aminomutase (441 aa).

An N6-(pyridoxal phosphate)lysine modification is found at lysine 276.

The protein belongs to the class-III pyridoxal-phosphate-dependent aminotransferase family. HemL subfamily. As to quaternary structure, homodimer. It depends on pyridoxal 5'-phosphate as a cofactor.

The protein localises to the cytoplasm. It catalyses the reaction (S)-4-amino-5-oxopentanoate = 5-aminolevulinate. Its pathway is porphyrin-containing compound metabolism; protoporphyrin-IX biosynthesis; 5-aminolevulinate from L-glutamyl-tRNA(Glu): step 2/2. This chain is Glutamate-1-semialdehyde 2,1-aminomutase, found in Rhodococcus jostii (strain RHA1).